Reading from the N-terminus, the 492-residue chain is MANYFNTLNLRQKLDQLGRCRFMDREEFADEANFLKGKKIVIVGCGAQGLNQGLNMRDSGLDISYALRPEAIAEKRASFQRATENGFKVGTYEELIPTADLVVNLTPDKQHSKVVADVMPLMKKDSAFGYSHGFNIVEVGEEIRKDITVVMVAPKCPGTEVREEYKRGFGVPTLIAVHPENDPKGEGLAIAKAWAAATGGHKAGVLESSFVAEVKSDLMGEQTILCGMLQAGSIVCYDKLVADGKDPAYAGKLIQYGWETITEALKQGGITLMMDRLSNSAKLRAFELAEQIKKSLGFLYYKHMDDIVSGHFSATMMADWENDDKDLFAWREATGKTAFENAPKYDGKISEQEYFDNGVLMIAMVKAGVELAFDAMVASGIYEESAYYESLHELPLIANTIARKRLYEMNVVISDTAEYGNYLFSNVATPILAKEIIPNLQKGDLGEPTPAVEVDNITLRAVNDAIRNHPVELIGQELRGYMTDMKRIAVAG.

The 195-residue stretch at L14–S208 folds into the KARI N-terminal Rossmann domain. NADP(+) contacts are provided by residues C45–Q48, R68, R76, S78, and D108–Q110. H132 is a catalytic residue. G158 is a binding site for NADP(+). 2 consecutive KARI C-terminal knotted domains span residues S209–K344 and Y345–M485. The Mg(2+) site is built by D217, E221, E389, and E393. S414 contacts substrate.

Belongs to the ketol-acid reductoisomerase family. Mg(2+) is required as a cofactor.

It catalyses the reaction (2R)-2,3-dihydroxy-3-methylbutanoate + NADP(+) = (2S)-2-acetolactate + NADPH + H(+). The catalysed reaction is (2R,3R)-2,3-dihydroxy-3-methylpentanoate + NADP(+) = (S)-2-ethyl-2-hydroxy-3-oxobutanoate + NADPH + H(+). It functions in the pathway amino-acid biosynthesis; L-isoleucine biosynthesis; L-isoleucine from 2-oxobutanoate: step 2/4. The protein operates within amino-acid biosynthesis; L-valine biosynthesis; L-valine from pyruvate: step 2/4. Functionally, involved in the biosynthesis of branched-chain amino acids (BCAA). Catalyzes an alkyl-migration followed by a ketol-acid reduction of (S)-2-acetolactate (S2AL) to yield (R)-2,3-dihydroxy-isovalerate. In the isomerase reaction, S2AL is rearranged via a Mg-dependent methyl migration to produce 3-hydroxy-3-methyl-2-ketobutyrate (HMKB). In the reductase reaction, this 2-ketoacid undergoes a metal-dependent reduction by NADPH to yield (R)-2,3-dihydroxy-isovalerate. This Haemophilus influenzae (strain PittGG) protein is Ketol-acid reductoisomerase (NADP(+)).